A 128-amino-acid chain; its full sequence is Ribonuclease P protein component (128 aa).

This sequence belongs to the RnpA family. In terms of assembly, consists of a catalytic RNA component (M1 or rnpB) and a protein subunit.

The enzyme catalyses Endonucleolytic cleavage of RNA, removing 5'-extranucleotides from tRNA precursor.. Functionally, RNaseP catalyzes the removal of the 5'-leader sequence from pre-tRNA to produce the mature 5'-terminus. It can also cleave other RNA substrates such as 4.5S RNA. The protein component plays an auxiliary but essential role in vivo by binding to the 5'-leader sequence and broadening the substrate specificity of the ribozyme. This Prochlorococcus marinus (strain MIT 9301) protein is Ribonuclease P protein component.